A 176-amino-acid chain; its full sequence is Caltractin (176 aa).

Residues 1–27 (MNRAAIAAGKPSGSISTGKPRRKTRAE) are disordered. 4 consecutive EF-hand domains span residues 31–66 (EMKH…LGFD), 67–102 (VKKE…KISN), 104–139 (DPTE…LSEN), and 140–175 (ISDE…TSAF). Residues Asp44, Asp46, Ser48, Arg50, and Glu55 each coordinate Ca(2+). Ca(2+)-binding residues include Asp153, Asp155, Asp157, Glu159, and Asp164.

The protein belongs to the centrin family. In terms of assembly, monomer.

It localises to the cytoplasm. The protein localises to the cytoskeleton. It is found in the microtubule organizing center. The protein resides in the centrosome. Plays a fundamental role in microtubule-organizing center structure and function. This Giardia intestinalis (Giardia lamblia) protein is Caltractin (CAL).